Here is a 315-residue protein sequence, read N- to C-terminus: Methionyl-tRNA formyltransferase (315 aa).

113–116 (SILP) is a (6S)-5,6,7,8-tetrahydrofolate binding site.

This sequence belongs to the Fmt family.

The catalysed reaction is L-methionyl-tRNA(fMet) + (6R)-10-formyltetrahydrofolate = N-formyl-L-methionyl-tRNA(fMet) + (6S)-5,6,7,8-tetrahydrofolate + H(+). Functionally, attaches a formyl group to the free amino group of methionyl-tRNA(fMet). The formyl group appears to play a dual role in the initiator identity of N-formylmethionyl-tRNA by promoting its recognition by IF2 and preventing the misappropriation of this tRNA by the elongation apparatus. The sequence is that of Methionyl-tRNA formyltransferase from Vibrio cholerae serotype O1 (strain M66-2).